The following is a 243-amino-acid chain: MQATAIIAASGIGKRMQLREGESKQLLEVGGFPVIYHTLKAFQMASSVKAIYIATRLENRSILEELAAASGFSKLKAIIEGGKERQDSVYNCIRAIEEEKRLTGASAEIILVHDGARPFIRSEEIDEIARLSMQYGACVPANRPKDTIKYVGENPEFFGETLDRSKLLQVQTPQGFQSNLLIQAHEQAELEGWYATDDAALVERFFPEQPVKIFETGYHNIKITTPEDIPVAEAIFSQISTRS.

The protein belongs to the IspD/TarI cytidylyltransferase family. IspD subfamily.

It catalyses the reaction 2-C-methyl-D-erythritol 4-phosphate + CTP + H(+) = 4-CDP-2-C-methyl-D-erythritol + diphosphate. It functions in the pathway isoprenoid biosynthesis; isopentenyl diphosphate biosynthesis via DXP pathway; isopentenyl diphosphate from 1-deoxy-D-xylulose 5-phosphate: step 2/6. Functionally, catalyzes the formation of 4-diphosphocytidyl-2-C-methyl-D-erythritol from CTP and 2-C-methyl-D-erythritol 4-phosphate (MEP). The sequence is that of 2-C-methyl-D-erythritol 4-phosphate cytidylyltransferase from Pelodictyon phaeoclathratiforme (strain DSM 5477 / BU-1).